The following is a 232-amino-acid chain: Very-long-chain (3R)-3-hydroxyacyl-CoA dehydratase 4 (232 aa).

Over 1 to 19 the chain is Cytoplasmic; that stretch reads MGPSVLPAWLQPRYRKNVY. A helical transmembrane segment spans residues 20-40; it reads LFIYYLIQFCGHSWILANMTV. Over 41-56 the chain is Lumenal; sequence RFFSFGKDSMADTFYA. Residues 57-77 traverse the membrane as a helical segment; that stretch reads IGLVMRVCQSISLLELLHIYI. Residues 78-112 are Cytoplasmic-facing; the sequence is GIESNQLFPRFLQLTERVIILFGVITSQEEVQEKC. Residues 113–133 form a helical membrane-spanning segment; sequence VVCVLFILWNLLDMVRYTYSM. Residues 134-135 are Lumenal-facing; that stretch reads LS. Residues 136 to 156 form a helical membrane-spanning segment; sequence VIGTSYAALTWLSQTLWMPIY. Residue tyrosine 156 is part of the active site. Position 157 (proline 157) is a topological domain, cytoplasmic. The chain crosses the membrane as a helical span at residues 158-178; it reads LCVLAEAFTIYQSLPYFESFG. Glutamate 163 is an active-site residue. The Lumenal portion of the chain corresponds to 179 to 189; that stretch reads TNSTVLPFDLS. A helical membrane pass occupies residues 190 to 210; it reads TCFPYVLKLYLMMLFIGMYFT. The Cytoplasmic portion of the chain corresponds to 211–232; it reads YSHLYTERKDFLRVFSVKQKNV.

The protein belongs to the very long-chain fatty acids dehydratase HACD family. As to quaternary structure, may interact with enzymes of the ELO family (including ELOVL1); with those enzymes that mediate condensation, the first of the four steps of the reaction cycle responsible for fatty acids elongation, may be part of a larger fatty acids elongase complex.

Its subcellular location is the endoplasmic reticulum membrane. It carries out the reaction a very-long-chain (3R)-3-hydroxyacyl-CoA = a very-long-chain (2E)-enoyl-CoA + H2O. The enzyme catalyses (3R)-hydroxyhexadecanoyl-CoA = (2E)-hexadecenoyl-CoA + H2O. Its pathway is lipid metabolism; fatty acid biosynthesis. In terms of biological role, catalyzes the third of the four reactions of the long-chain fatty acids elongation cycle. This endoplasmic reticulum-bound enzymatic process, allows the addition of two carbons to the chain of long- and very long-chain fatty acids/VLCFAs per cycle. This enzyme catalyzes the dehydration of the 3-hydroxyacyl-CoA intermediate into trans-2,3-enoyl-CoA, within each cycle of fatty acid elongation. Thereby, it participates in the production of VLCFAs of different chain lengths that are involved in multiple biological processes as precursors of membrane lipids and lipid mediators. The polypeptide is Very-long-chain (3R)-3-hydroxyacyl-CoA dehydratase 4 (Mus musculus (Mouse)).